A 1836-amino-acid chain; its full sequence is Sodium channel protein type 4 subunit alpha (1836 aa).

The Cytoplasmic segment spans residues 1–131 (MARPSLCTLV…RGAIKVLIHA (131 aa)). Positions 39 to 60 (LQRNKQMEIEEPERKPRSDLEA) are enriched in basic and acidic residues. The disordered stretch occupies residues 39-63 (LQRNKQMEIEEPERKPRSDLEAGKN). An I repeat occupies 113–454 (LLSPFSVVRR…VVAMAYAEQN (342 aa)). A helical transmembrane segment spans residues 132-150 (LFSMFIMITILTNCVFMTM). At 151–157 (SDPPPWS) the chain is on the extracellular side. The helical transmembrane segment at 158–178 (KNVEYTFTGIYTFESLIKILA) threads the bilayer. Residues 179–192 (RGFCVDDFTFLRDP) are Cytoplasmic-facing. The helical transmembrane segment at 193–210 (WNWLDFSVIMMAYLTEFV) threads the bilayer. The Extracellular portion of the chain corresponds to 211-216 (DLGNIS). N214 carries N-linked (GlcNAc...) asparagine glycosylation. The helical transmembrane segment at 217-233 (ALRTFRVLRALKTITVI) threads the bilayer. Over 234–252 (PGLKTIVGALIQSVKKLSD) the chain is Cytoplasmic. A helical transmembrane segment spans residues 253–272 (VMILTVFCLSVFALVGLQLF). Topologically, residues 273-391 (MGNLRQKCVR…PNYGYTSYDT (119 aa)) are extracellular. C280 and C360 are oxidised to a cystine. Residues N288, N291, N297, N303, N315, N321, N333, and N362 are each glycosylated (N-linked (GlcNAc...) asparagine). Cysteines 369 and 375 form a disulfide. The segment at residues 392–416 (FSWAFLALFRLMTQDYWENLFQLTL) is an intramembrane region (pore-forming). Topologically, residues 417–423 (RAAGKTY) are extracellular. Residues 424–444 (MIFFVVIIFLGSFYLINLILA) form a helical membrane-spanning segment. Topologically, residues 445–578 (VVAMAYAEQN…NIIHLIVMDP (134 aa)) are cytoplasmic. The tract at residues 493–530 (GGEADGDPAHGKDCNGSLDTSQGEKGAPRQSSSGDSGI) is disordered. Polar residues predominate over residues 509–528 (SLDTSQGEKGAPRQSSSGDS). Residues 560 to 832 (CCAPWLKFKN…QIAIGRIKLG (273 aa)) form an II repeat. The helical transmembrane segment at 579-597 (FVDLGITICIVLNTLFMAM) threads the bilayer. Topologically, residues 598-608 (EHYPMTEHFDN) are extracellular. The helical transmembrane segment at 609-628 (VLTVGNLVFTGIFTAEMVLK) threads the bilayer. Residues 629 to 642 (LIAMDPYEYFQQGW) lie on the Cytoplasmic side of the membrane. Residues 643 to 662 (NIFDSIIVTLSLVELGLANV) form a helical membrane-spanning segment. The Extracellular portion of the chain corresponds to 663-664 (QG). The chain crosses the membrane as a helical span at residues 665–682 (LSVLRSFRLLRVFKLAKS). At 683-698 (WPTLNMLIKIIGNSVG) the chain is on the cytoplasmic side. A helical membrane pass occupies residues 699–717 (ALGNLTLVLAIIVFIFAVV). The Extracellular segment spans residues 718-746 (GMQLFGKSYKECVCKIALDCNLPRWHMHD). An intrachain disulfide couples C731 to C737. An intramembrane region (pore-forming) is located at residues 747–767 (FFHSFLIVFRILCGEWIETMW). At 768-778 (DCMEVAGQAMC) the chain is on the extracellular side. C769 and C778 form a disulfide bridge. The chain crosses the membrane as a helical span at residues 779 to 797 (LTVFLMVMVIGNLVVLNLF). At 798–1032 (LALLLSSFSA…ACFKIVEHNW (235 aa)) the chain is on the cytoplasmic side. Disordered stretches follow at residues 863-885 (GAGEAGEAGETAPEDEKKEPPEE) and 930-992 (ESDL…QPEE). The segment covering 876-885 (EDEKKEPPEE) has biased composition (basic and acidic residues). 2 stretches are compositionally biased toward acidic residues: residues 930–947 (ESDLEMPTEEETDTFSEP) and 975–992 (EDPEEQAEENPEGEQPEE). The III repeat unit spans residues 1013–1326 (RGKKWWTLRR…KKYYNAMKKL (314 aa)). Residues 1033–1050 (FETFIVFMILLSSGALAF) form a helical membrane-spanning segment. Over 1051 to 1063 (EDIYIEQRRVIRT) the chain is Extracellular. A helical transmembrane segment spans residues 1064-1082 (ILEYADKVFTYIFIMEMLL). The Cytoplasmic segment spans residues 1083–1096 (KWVAYGFKVYFTNA). The helical transmembrane segment at 1097 to 1115 (WCWLDFLIVDVSIISLVAN) threads the bilayer. Residues 1116–1123 (WLGYSELG) are Extracellular-facing. The helical transmembrane segment at 1124 to 1142 (PIKSLRTLRALRPLRALSR) threads the bilayer. The Cytoplasmic segment spans residues 1143 to 1159 (FEGMRVVVNALLGAIPS). Residues 1160 to 1179 (IMNVLLVCLIFWLIFSIMGV) form a helical membrane-spanning segment. Residues 1180–1230 (NLFAGKFYYCINTTTSERFDISEVNNKSECESLMHTGQVRWLNVKVNYDNV) are Extracellular-facing. C1189 and C1209 are joined by a disulfide. Residues N1191 and N1205 are each glycosylated (N-linked (GlcNAc...) asparagine). An intramembrane region (pore-forming) is located at residues 1231–1252 (GLGYLSLLQVATFKGWMDIMYA). The Extracellular portion of the chain corresponds to 1253–1269 (AVDSREKEEQPQYEVNL). Residues 1270 to 1291 (YMYLYFVIFIIFGSFFTLNLFI) form a helical membrane-spanning segment. Residues 1292–1354 (GVIIDNFNQQ…MVYDLVTKQA (63 aa)) lie on the Cytoplasmic side of the membrane. Residues 1310–1312 (IFM) form an important for rapid channel inactivation region. The IV repeat unit spans residues 1335 to 1633 (IPRPQNKIQG…WEKFDPDATQ (299 aa)). Residues 1355 to 1372 (FDITIMILICLNMVTMMV) traverse the membrane as a helical segment. Over 1373-1383 (ETDNQSQLKVD) the chain is Extracellular. The chain crosses the membrane as a helical span at residues 1384 to 1402 (ILYNINMIFIIIFTGECVL). Residues 1403 to 1414 (KMLALRQYYFTV) lie on the Cytoplasmic side of the membrane. The helical transmembrane segment at 1415–1432 (GWNIFDFVVVILSIVGLA) threads the bilayer. Topologically, residues 1433-1445 (LSDLIQKYFVSPT) are extracellular. The helical transmembrane segment at 1446-1462 (LFRVIRLARIGRVLRLI) threads the bilayer. The Cytoplasmic portion of the chain corresponds to 1463-1481 (RGAKGIRTLLFALMMSLPA). Residues 1482-1499 (LFNIGLLLFLVMFIYSIF) traverse the membrane as a helical segment. Residues 1500-1521 (GMSNFAYVKKESGIDDMFNFET) lie on the Extracellular side of the membrane. Residues 1522-1544 (FGNSIICLFEITTSAGWDGLLNP) constitute an intramembrane region (pore-forming). Topologically, residues 1545–1574 (ILNSGPPDCDPNLENPGTSVKGDCGNPSIG) are extracellular. An intrachain disulfide couples C1553 to C1568. The chain crosses the membrane as a helical span at residues 1575 to 1597 (ICFFCSYIIISFLIVVNMYIAII). Topologically, residues 1598–1836 (LENFNVATEE…VRPGVKESLV (239 aa)) are cytoplasmic. Residues 1727–1756 (EEVCAIKIQRAYRRHLLQRSMKQASYMYRH) enclose the IQ domain. Residues 1778–1836 (KMYGHENGNSSSPSPEEKGEAGDAGPTMGLMPISPSDTAWPPAPPPGQTVRPGVKESLV) form a disordered region.

The protein belongs to the sodium channel (TC 1.A.1.10) family. Nav1.4/SCN4A subfamily. In terms of assembly, the Nav1.4 voltage-gated sodium channel consists of an ion-conducting alpha subunit SCN4A which is functional on its own and a regulatory beta subunit SCN1B. SCN1B strongly enhances the presence of SCN4A at the cell surface. SCN1B is also required for rapid channel inactivation and recovery after inactivation. It prevents the decrease of channel activity in response to repetitive, high-frequency depolarizations. Interacts with the syntrophins SNTA1, SNTB1 and SNTB2 (via PDZ domain); probably links SCN4A to the actin cytoskeleton and the extracellular matrix via the dystrophin-associated protein complex and regulates its localization in muscle cells. Interacts with TMEM233; probable regulator of the channel.

Its subcellular location is the cell membrane. It carries out the reaction Na(+)(in) = Na(+)(out). The channel is inhibited by tetrodotoxin and saxitoxin. Inhibited by the conotoxin GVIIJ. In terms of biological role, pore-forming subunit of Nav1.4, a voltage-gated sodium (Nav) channel that directly mediates the depolarizing phase of action potentials in excitable membranes. Navs, also called VGSCs (voltage-gated sodium channels) or VDSCs (voltage-dependent sodium channels), operate by switching between closed and open conformations depending on the voltage difference across the membrane. In the open conformation they allow Na(+) ions to selectively pass through the pore, along their electrochemical gradient. The influx of Na+ ions provokes membrane depolarization, initiating the propagation of electrical signals throughout cells and tissues. Highly expressed in skeletal muscles, Nav1.4 generates the action potential crucial for muscle contraction. In Homo sapiens (Human), this protein is Sodium channel protein type 4 subunit alpha.